The primary structure comprises 89 residues: MANIKSAKKRVKQTVVRNERNTAQRSMLRTAVKKVIKALSIKDIAGAETAFAVAQPILDRFSSRGLIHKNKAARHKSRLTARIKALKTA.

Basic residues predominate over residues 1–12 (MANIKSAKKRVK). The disordered stretch occupies residues 1–20 (MANIKSAKKRVKQTVVRNER).

It belongs to the bacterial ribosomal protein bS20 family.

Binds directly to 16S ribosomal RNA. This chain is Small ribosomal subunit protein bS20, found in Xylella fastidiosa (strain 9a5c).